Consider the following 406-residue polypeptide: Argininosuccinate synthase (406 aa).

ATP is bound by residues 12 to 20 (AYSGGLDTS) and alanine 39. L-citrulline-binding residues include tyrosine 90 and serine 95. Glycine 120 contacts ATP. L-aspartate-binding residues include threonine 122, asparagine 126, and aspartate 127. Residue asparagine 126 participates in L-citrulline binding. L-citrulline is bound by residues arginine 130, serine 179, serine 188, glutamate 264, and tyrosine 276.

This sequence belongs to the argininosuccinate synthase family. Type 1 subfamily. In terms of assembly, homotetramer.

The protein resides in the cytoplasm. It carries out the reaction L-citrulline + L-aspartate + ATP = 2-(N(omega)-L-arginino)succinate + AMP + diphosphate + H(+). The protein operates within amino-acid biosynthesis; L-arginine biosynthesis; L-arginine from L-ornithine and carbamoyl phosphate: step 2/3. The chain is Argininosuccinate synthase from Geotalea uraniireducens (strain Rf4) (Geobacter uraniireducens).